Consider the following 126-residue polypeptide: Glycine cleavage system H protein (126 aa).

The 83-residue stretch at 22–104 folds into the Lipoyl-binding domain; sequence VAYVGITDYA…YGEGWLIKMK (83 aa). At Lys63 the chain carries N6-lipoyllysine.

The protein belongs to the GcvH family. The glycine cleavage system is composed of four proteins: P, T, L and H. Requires (R)-lipoate as cofactor.

The glycine cleavage system catalyzes the degradation of glycine. The H protein shuttles the methylamine group of glycine from the P protein to the T protein. In Bacteroides fragilis (strain YCH46), this protein is Glycine cleavage system H protein.